Reading from the N-terminus, the 757-residue chain is 5-methyltetrahydropteroyltriglutamate--homocysteine methyltransferase (757 aa).

5-methyltetrahydropteroyltri-L-glutamate is bound by residues 17-20 and K117; that span reads RELK. Residues 434-436 and E487 contribute to the L-homocysteine site; that span reads IGS. L-methionine is bound by residues 434-436 and E487; that span reads IGS. 5-methyltetrahydropteroyltri-L-glutamate contacts are provided by residues 518–519 and W564; that span reads RC. D602 contacts L-homocysteine. D602 lines the L-methionine pocket. E608 provides a ligand contact to 5-methyltetrahydropteroyltri-L-glutamate. Zn(2+) is bound by residues H644, C646, and E668. H697 (proton donor) is an active-site residue. Zn(2+) is bound at residue C729.

This sequence belongs to the vitamin-B12 independent methionine synthase family. It depends on Zn(2+) as a cofactor.

The enzyme catalyses 5-methyltetrahydropteroyltri-L-glutamate + L-homocysteine = tetrahydropteroyltri-L-glutamate + L-methionine. Its pathway is amino-acid biosynthesis; L-methionine biosynthesis via de novo pathway; L-methionine from L-homocysteine (MetE route): step 1/1. Its function is as follows. Catalyzes the transfer of a methyl group from 5-methyltetrahydrofolate to homocysteine resulting in methionine formation. The sequence is that of 5-methyltetrahydropteroyltriglutamate--homocysteine methyltransferase from Proteus mirabilis (strain HI4320).